A 675-amino-acid chain; its full sequence is Rho guanine nucleotide exchange factor 37 (675 aa).

A disordered region spans residues 1–26; sequence MAKHGADEPSSRSGSPDREGRASEDR. The 184-residue stretch at 30–213 folds into the DH domain; the sequence is HQRLAVRELI…QDVNTNINEY (184 aa). Residues 254 to 455 form the BAR domain; that stretch reads LKQEAGLIPR…LPHHHVPEPA (202 aa). SH3 domains lie at 506 to 569 and 602 to 665; these read GPGK…LYHV and PTMN…RARS.

Its function is as follows. May act as a guanine nucleotide exchange factor (GEF). The sequence is that of Rho guanine nucleotide exchange factor 37 (ARHGEF37) from Homo sapiens (Human).